We begin with the raw amino-acid sequence, 88 residues long: MALLDFFLSRKKNTANIAKERLQIIVAERRRSDAEPHYLPQLRKDILEVICKYVQIDPEMVTVQLEQKDGDISILELNVTLPEAEELK.

The protein belongs to the MinE family.

Functionally, prevents the cell division inhibition by proteins MinC and MinD at internal division sites while permitting inhibition at polar sites. This ensures cell division at the proper site by restricting the formation of a division septum at the midpoint of the long axis of the cell. This is Cell division topological specificity factor from Escherichia coli (strain SMS-3-5 / SECEC).